The primary structure comprises 321 residues: Phosphatidylglycerol phospholipase C (321 aa).

Residues 2-251 form the GP-PDE domain; it reads VEIVGHRAFK…DDPIKARKLC (250 aa). The chain crosses the membrane as a helical; Anchor for type IV membrane protein span at residues 297–315; the sequence is WVHIKLCGWSIAYVIFLFL.

It belongs to the glycerophosphoryl diester phosphodiesterase family.

The protein localises to the mitochondrion membrane. It is found in the lipid droplet. The catalysed reaction is a 1,2-diacyl-sn-glycero-3-phospho-(1'-sn-glycerol) + H2O = sn-glycerol 3-phosphate + a 1,2-diacyl-sn-glycerol + H(+). Phosphatidylglycerol phospholipase required for the removal of excess phosphatidylglycerol (PG) via a phospholipase C-type degradation mechanism. The sequence is that of Phosphatidylglycerol phospholipase C (PGC1) from Saccharomyces cerevisiae (strain ATCC 204508 / S288c) (Baker's yeast).